The sequence spans 1230 residues: DNA-directed RNA polymerase, mitochondrial (1230 aa).

The transit peptide at 1 to 41 (MSALCWGRGAAGLKRALRPCGRPGLPGKEGTAGGVCGPRRS) directs the protein to the mitochondrion. Disordered regions lie at residues 18-55 (RPCG…DRRK), 95-115 (GSGD…KDAT), and 731-750 (VPAP…PHSA). Pro residues predominate over residues 732–744 (PAPPSEAPQPPEA). Residues 802 to 1230 (FRGRTYPCPP…QVKRSTYFFS (429 aa)) are mediates interaction with TEFM. Catalysis depends on residues Asp-922, Lys-991, and Asp-1151.

This sequence belongs to the phage and mitochondrial RNA polymerase family. As to quaternary structure, homodimer. Component of the mitochondrial transcription initiation complex, composed at least of TFB2M, TFAM and POLRMT. In this complex TFAM recruits POLRMT to the promoter whereas TFB2M induces structural changes in POLRMT to enable promoter opening and trapping of the DNA non-template strand. Upon metabolic stress, forms a complex composed of FOXO3, SIRT3 and mitochondrial RNA polymerase POLRMT; the complex is recruited to mtDNA in a SIRT3-dependent manner. Also forms a complex composed of FOXO3, SIRT3, TFAM and POLRMT. Interacts with TFB1M and TFB2M, leading to the stimulation of transcription. Interacts with TEFM. Interacts with MTRES1.

It localises to the mitochondrion. The enzyme catalyses RNA(n) + a ribonucleoside 5'-triphosphate = RNA(n+1) + diphosphate. Functionally, DNA-dependent RNA polymerase catalyzes the transcription of mitochondrial DNA into RNA using the four ribonucleoside triphosphates as substrates. Component of the mitochondrial transcription initiation complex, composed at least of TFB2M, TFAM and POLRMT that is required for basal transcription of mitochondrial DNA. In this complex, TFAM recruits POLRMT to a specific promoter whereas TFB2M induces structural changes in POLRMT to enable promoter opening and trapping of the DNA non-template strand. Has DNA primase activity. Catalyzes the synthesis of short RNA primers that are necessary for the initiation of lagging-strand DNA synthesis from the origin of light-strand DNA replication (OriL). The sequence is that of DNA-directed RNA polymerase, mitochondrial from Homo sapiens (Human).